The primary structure comprises 274 residues: Actin-binding protein Smlt3054 (274 aa).

ANK repeat units lie at residues S192–A221 and H225–Q254. The interval N251–L274 is disordered.

Exists as a dimer as well as a higher order oligomer.

It localises to the secreted. Its subcellular location is the periplasm. In terms of biological role, directly binds F-actin, which results in thickened and distorted F-actin fibers, and affects cellular F-actin localization. Thus, may be a host effector whose function is to disrupt host actin cytoskeletal structure, which may enhance invasion. The protein is Actin-binding protein Smlt3054 of Stenotrophomonas maltophilia (strain K279a).